A 283-amino-acid chain; its full sequence is ATP phosphoribosyltransferase (283 aa).

The protein belongs to the ATP phosphoribosyltransferase family. Long subfamily. Mg(2+) is required as a cofactor.

Its subcellular location is the cytoplasm. It catalyses the reaction 1-(5-phospho-beta-D-ribosyl)-ATP + diphosphate = 5-phospho-alpha-D-ribose 1-diphosphate + ATP. It functions in the pathway amino-acid biosynthesis; L-histidine biosynthesis; L-histidine from 5-phospho-alpha-D-ribose 1-diphosphate: step 1/9. With respect to regulation, feedback inhibited by histidine. Catalyzes the condensation of ATP and 5-phosphoribose 1-diphosphate to form N'-(5'-phosphoribosyl)-ATP (PR-ATP). Has a crucial role in the pathway because the rate of histidine biosynthesis seems to be controlled primarily by regulation of HisG enzymatic activity. This chain is ATP phosphoribosyltransferase, found in Parabacteroides distasonis (strain ATCC 8503 / DSM 20701 / CIP 104284 / JCM 5825 / NCTC 11152).